The sequence spans 207 residues: ATP-dependent Clp protease proteolytic subunit (207 aa).

The active-site Nucleophile is serine 111. Histidine 136 is an active-site residue.

It belongs to the peptidase S14 family. In terms of assembly, fourteen ClpP subunits assemble into 2 heptameric rings which stack back to back to give a disk-like structure with a central cavity, resembling the structure of eukaryotic proteasomes. Component of the ClpAP and ClpXP complexes.

It is found in the cytoplasm. The enzyme catalyses Hydrolysis of proteins to small peptides in the presence of ATP and magnesium. alpha-casein is the usual test substrate. In the absence of ATP, only oligopeptides shorter than five residues are hydrolyzed (such as succinyl-Leu-Tyr-|-NHMec, and Leu-Tyr-Leu-|-Tyr-Trp, in which cleavage of the -Tyr-|-Leu- and -Tyr-|-Trp bonds also occurs).. Its function is as follows. Cleaves peptides in various proteins in a process that requires ATP hydrolysis. Has a chymotrypsin-like activity. Plays a major role in the degradation of misfolded proteins. This chain is ATP-dependent Clp protease proteolytic subunit, found in Escherichia coli O139:H28 (strain E24377A / ETEC).